Here is a 116-residue protein sequence, read N- to C-terminus: Dynein light chain Tctex-type 3 (116 aa).

A 3'-nitrotyrosine modification is found at tyrosine 4.

The protein belongs to the dynein light chain Tctex-type family. In terms of assembly, homodimer. The cytoplasmic dynein 1 complex consists of two catalytic heavy chains (HCs) and a number of non-catalytic subunits presented by intermediate chains (ICs), light intermediate chains (LICs) and light chains (LCs); the composition seems to vary in respect to the IC, LIC and LC composition. The heavy chain homodimer serves as a scaffold for the probable homodimeric assembly of the respective non-catalytic subunits. The ICs and LICs bind directly to the HC dimer and the LCs assemble on the IC dimer. DYNLT1 and DYNLT3 compete for association with dynein IC (DYNC1I1 or DYNC1I2). Self-associates. Interacts with DYNC1I1 and DYNC1I2. Interacts with BUB3. Interacts with SATB1 in nucleus to form complex with matrix attachment regions (MARs) of DNA.

It localises to the nucleus. The protein localises to the cytoplasm. Its subcellular location is the cytoskeleton. It is found in the chromosome. The protein resides in the centromere. It localises to the kinetochore. Acts as one of several non-catalytic accessory components of the cytoplasmic dynein 1 complex that are thought to be involved in linking dynein to cargos and to adapter proteins that regulate dynein function. Cytoplasmic dynein 1 acts as a motor for the intracellular retrograde motility of vesicles and organelles along microtubules. Probably binds BUB3 as part of transport cargo. Required for the efficient progression through mitosis. In Ovis aries (Sheep), this protein is Dynein light chain Tctex-type 3 (DYNLT3).